The chain runs to 535 residues: Importin subunit alpha-2 (535 aa).

The IBB domain maps to 1-58 (MSLRPNAKTEVRRNRYKVAVDAEEGRRRREDNMVEIRKSKREESLQKKRREGLQANQL). Over residues 20–46 (VDAEEGRRRREDNMVEIRKSKREESLQ) the composition is skewed to basic and acidic residues. Residues 20–67 (VDAEEGRRRREDNMVEIRKSKREESLQKKRREGLQANQLPQFAPSPVP) are disordered. 10 ARM repeats span residues 67-106 (PASS…KLLS), 110-150 (SPPI…NIAS), 153-192 (SENT…NVAG), 195-235 (PRCR…NFCR), 237-276 (KPQP…YLSD), 279-318 (NDKI…NIVT), 321-361 (DLQT…NITA), 364-403 (RDQI…NATS), 407-446 (PDQI…NILK), and 461-500 (NFYA…TYWL).

It belongs to the importin alpha family. In terms of assembly, forms a complex with the importin subunit beta-1 KPNB1. Interacts with A.tumefaciens VirD2 and VirE2. Binds to SWO1.

It is found in the nucleus envelope. In terms of biological role, binds to conventional NLS motifs and mediates nuclear protein import across the nuclear envelope. Involved in the maintenance of cell wall integrity under salt stress via interaction with SWO1. Acts as a cellular receptor for the nuclear import of the virD2 protein of Agrobacterium, but is not essential for Agrobacterium-mediated root transformation. The sequence is that of Importin subunit alpha-2 from Arabidopsis thaliana (Mouse-ear cress).